The primary structure comprises 75 residues: Large ribosomal subunit protein bL31 (75 aa).

This sequence belongs to the bacterial ribosomal protein bL31 family. Type A subfamily. As to quaternary structure, part of the 50S ribosomal subunit.

Its function is as follows. Binds the 23S rRNA. The chain is Large ribosomal subunit protein bL31 from Gluconobacter oxydans (strain 621H) (Gluconobacter suboxydans).